Reading from the N-terminus, the 337-residue chain is P2Y purinoceptor 14 (337 aa).

Residues 1–28 lie on the Extracellular side of the membrane; the sequence is MNATSVPPAEGSCPSNALITKQIIPMLY. An N-linked (GlcNAc...) asparagine glycan is attached at asparagine 2. Residues 29 to 49 traverse the membrane as a helical segment; sequence FVVFVAGILLNGMSGWVFFYV. Residues 50–54 lie on the Cytoplasmic side of the membrane; the sequence is PSSKS. A helical membrane pass occupies residues 55–75; that stretch reads FIVYLKNIVIADFLMSLTFPF. At 76-95 the chain is on the extracellular side; sequence KILGDLGLGLWQVKVFVCRV. Cysteine 93 and cysteine 171 are disulfide-bonded. Residues 96–116 form a helical membrane-spanning segment; the sequence is SAVLFYINMYVSIVFFGLIGF. The Cytoplasmic segment spans residues 117–138; that stretch reads DRYYKIVKPLLTSFIQSISYSK. The helical transmembrane segment at 139 to 159 threads the bilayer; sequence LLSVLVWSLTLLIALPNMILT. Residues 160–187 lie on the Extracellular side of the membrane; the sequence is NRNVTEATRVKCMDLKSDLGLKWHKASS. Asparagine 162 carries N-linked (GlcNAc...) asparagine glycosylation. Residues 188–208 form a helical membrane-spanning segment; sequence YIFVGIFWIVFLSLIIFYTAI. The Cytoplasmic segment spans residues 209–233; sequence TKKIFKSHFKSRKNSVSVKKKSSRN. The helical transmembrane segment at 234 to 254 threads the bilayer; the sequence is IFSIMFVFFICFVPYHIARIP. At 255–277 the chain is on the extracellular side; it reads YTQSQTEAHYSCQSKQILFYVKE. A helical transmembrane segment spans residues 278–298; sequence FSLLLSAANVCLDPIIYFFLC. The Cytoplasmic segment spans residues 299–337; it reads QPFREVLCKKLHIQLKTQHDSETSKIKRENIIQESTDTL.

Belongs to the G-protein coupled receptor 1 family.

Its subcellular location is the cell membrane. In terms of biological role, receptor for UDP-glucose and other UDP-sugar coupled to G-proteins. Not activated by ATP, ADP, UTP or ATP. This is P2Y purinoceptor 14 (P2RY14) from Bos taurus (Bovine).